The chain runs to 825 residues: PR domain zinc finger protein 1 (825 aa).

One can recognise an SET domain in the interval 84–201; that stretch reads PRNLLFKYAT…ANQELLVWYC (118 aa). Low complexity predominate over residues 324–361; it reads ITRSPIPSSTTPSPSARSSPDQSLKSSSPHSSPGNTVS. A disordered region spans residues 324-369; it reads ITRSPIPSSTTPSPSARSSPDQSLKSSSPHSSPGNTVSPVGPGSQE. Residues 527 to 574 are interaction with PIAS1; the sequence is HVVQPKATSAAMAAPSSDEAMNLIKNKRNMTGYKTLPYPLKKQNGKIK. 4 C2H2-type zinc fingers span residues 575–597, 603–625, 631–653, and 659–681; these read YECN…LRVH, FKCQ…YLVH, HECQ…LRLH, and YQCK…KRLH. Lys816 participates in a covalent cross-link: Glycyl lysine isopeptide (Lys-Gly) (interchain with G-Cter in SUMO1); alternate. Lys816 is covalently cross-linked (Glycyl lysine isopeptide (Lys-Gly) (interchain with G-Cter in SUMO2); alternate).

It belongs to the class V-like SAM-binding methyltransferase superfamily. Interacts with PRMT5. Interacts with FBXO10. Interacts with FBXO11. Interacts with multiple nuclear sumoylation E3 ligases, including CBX4, PIAS1, PIAS2, PIAS3, PIAS4, PML and RNF4, but not RANBP2. Interacts with LDB1, SMARCD3 and SMARCC1. Interacts with EEIG1; following TNFSF11/RANKL stimulation in bone marrow-derived macrophages, the interaction promotes the binding of PRDM1/BLIMP1 to the gene promoter of IRF8. Post-translationally, sumoylation at Lys-816 by PIAS1 augments transcriptional repressor activity, and is critical for plasma cell differentiation. Can be sumoylated with SUMO1 and SUMO2 by PML. Degradation of the wild-type protein mostly depends upon sumoylation, rather than ubiquitination. Desumoylated by SENP1 and SENP6. Ubiquitinated by the SCF(FBXO11) complex, leading to its degradation by the proteasome.

It localises to the nucleus. Its subcellular location is the cytoplasm. Its function is as follows. Transcription factor that mediates a transcriptional program in various innate and adaptive immune tissue-resident lymphocyte T cell types such as tissue-resident memory T (Trm), natural killer (trNK) and natural killer T (NKT) cells and negatively regulates gene expression of proteins that promote the egress of tissue-resident T-cell populations from non-lymphoid organs. Plays a role in the development, retention and long-term establishment of adaptive and innate tissue-resident lymphocyte T cell types in non-lymphoid organs, such as the skin and gut, but also in other nonbarrier tissues like liver and kidney, and therefore may provide immediate immunological protection against reactivating infections or viral reinfection. Binds specifically to the PRDI element in the promoter of the beta-interferon gene. Drives the maturation of B-lymphocytes into Ig secreting cells. Associates with the transcriptional repressor ZNF683 to chromatin at gene promoter regions. Binds to the promoter and acts as a transcriptional repressor of IRF8, thereby promotes transcription of osteoclast differentiation factors such as NFATC1 and EEIG1. The chain is PR domain zinc finger protein 1 (PRDM1) from Homo sapiens (Human).